The primary structure comprises 104 residues: N(4)-acetylcytidine amidohydrolase (104 aa).

The ASCH domain maps to 6 to 94 (ITFFQRFQND…IAEIYPNQTQ (89 aa)). Residue Lys21 is the Proton acceptor of the active site. Thr24 functions as the Nucleophile in the catalytic mechanism. Catalysis depends on Glu74, which acts as the Proton donor.

Belongs to the N(4)-acetylcytidine amidohydrolase family.

The catalysed reaction is N(4)-acetylcytidine + H2O = cytidine + acetate + H(+). The enzyme catalyses N(4)-acetyl-2'-deoxycytidine + H2O = 2'-deoxycytidine + acetate + H(+). It catalyses the reaction N(4)-acetylcytosine + H2O = cytosine + acetate + H(+). Functionally, catalyzes the hydrolysis of N(4)-acetylcytidine (ac4C). This chain is N(4)-acetylcytidine amidohydrolase (yqfB), found in Salmonella dublin (strain CT_02021853).